The following is a 146-amino-acid chain: Hemoglobin subunit beta (146 aa).

The residue at position 1 (Val1) is an N-acetylvaline. The region spanning 2 to 146 is the Globin domain; that stretch reads HLTGEEKSAV…VANALAHKYH (145 aa). Residue Thr12 is modified to Phosphothreonine. Ser44 carries the phosphoserine modification. N6-acetyllysine is present on Lys59. His63 is a binding site for heme b. N6-acetyllysine is present on Lys82. His92 contacts heme b. The residue at position 93 (Cys93) is an S-nitrosocysteine. Lys144 is modified (N6-acetyllysine).

It belongs to the globin family. In terms of assembly, heterotetramer of two alpha chains and two beta chains. Red blood cells.

Functionally, involved in oxygen transport from the lung to the various peripheral tissues. This chain is Hemoglobin subunit beta (HBB), found in Phoca vitulina (Harbor seal).